We begin with the raw amino-acid sequence, 1229 residues long: Receptor-type adenylate cyclase GRESAG 4.3 (1229 aa).

Over 1–24 (MIARVCRLTKHSKPPHLPITLTTP) the chain is Cytoplasmic. A helical membrane pass occupies residues 25–45 (TLFLVVLVLLQLHPICVLVNV). At 46–845 (DDGGGVTVKA…PNGNALTPAQ (800 aa)) the chain is on the extracellular side. N-linked (GlcNAc...) asparagine glycosylation is found at asparagine 77, asparagine 84, asparagine 626, asparagine 693, and asparagine 768. Residues 846-866 (LAGVVGGSLFVVALAICLSVL) traverse the membrane as a helical segment. Over 867 to 1229 (ACFTLRGTRD…SNDLSDMIRV (363 aa)) the chain is Cytoplasmic. One can recognise a Guanylate cyclase domain in the interval 889 to 1043 (TLIFTDIESS…RTSNMAARTE (155 aa)). Aspartate 894 and aspartate 937 together coordinate Mg(2+).

It belongs to the adenylyl cyclase class-3 family. Requires Mg(2+) as cofactor.

Its subcellular location is the membrane. It carries out the reaction ATP = 3',5'-cyclic AMP + diphosphate. In terms of biological role, could act as a receptor for an unknown ligand. This is Receptor-type adenylate cyclase GRESAG 4.3 (GRESAG 4.3) from Trypanosoma brucei brucei.